The chain runs to 122 residues: Nuclear transport factor 2A (122 aa).

Residue Met-1 is modified to N-acetylmethionine. One can recognise an NTF2 domain in the interval 6–119 (VAKAFVEHYY…YYVFNDIFRL (114 aa)).

Interacts with RAN1. Expressed in roots, stems, leaves and flowers, and, at low levels, in siliques.

The protein resides in the cytoplasm. The protein localises to the nucleus. It is found in the nucleus envelope. Its function is as follows. Facilitates protein transport into the nucleus. Interacts with various nucleoporins and with Ran-GDP. Could be part of a multicomponent system of cytosolic factors that assemble at the pore complex during nuclear import. In Arabidopsis thaliana (Mouse-ear cress), this protein is Nuclear transport factor 2A.